Reading from the N-terminus, the 201-residue chain is B-cell CLL/lymphoma 7 protein family member A (201 aa).

The tract at residues 46–201 (YKWVPVTEPK…GKIDSSSEES (156 aa)) is disordered. The span at 54 to 71 (PKSDDNKNKKKGKDDKYG) shows a compositional bias: basic and acidic residues. 3 stretches are compositionally biased toward polar residues: residues 73-83 (EVTTPENSSSP), 93-114 (SNQS…NTSP), and 133-142 (QYPSKQPSSG). Positions 158–167 (TSKRDSKSQG) are enriched in basic and acidic residues. Positions 168–179 (DSESFLDSSKSA) are enriched in polar residues. A compositionally biased stretch (basic and acidic residues) spans 192–201 (GKIDSSSEES).

Belongs to the BCL7 family.

This chain is B-cell CLL/lymphoma 7 protein family member A (bcl7a), found in Danio rerio (Zebrafish).